Reading from the N-terminus, the 181-residue chain is Adenine phosphoribosyltransferase (181 aa).

This sequence belongs to the purine/pyrimidine phosphoribosyltransferase family. Homodimer.

Its subcellular location is the cytoplasm. It carries out the reaction AMP + diphosphate = 5-phospho-alpha-D-ribose 1-diphosphate + adenine. Its pathway is purine metabolism; AMP biosynthesis via salvage pathway; AMP from adenine: step 1/1. In terms of biological role, catalyzes a salvage reaction resulting in the formation of AMP, that is energically less costly than de novo synthesis. The polypeptide is Adenine phosphoribosyltransferase (Chelativorans sp. (strain BNC1)).